The primary structure comprises 198 residues: dITP/XTP pyrophosphatase (198 aa).

Thr-7–Lys-12 serves as a coordination point for substrate. Mg(2+) is bound by residues Glu-40 and Asp-69. The active-site Proton acceptor is Asp-69. Substrate-binding positions include Thr-70, Phe-151–Asp-154, Lys-174, and His-179–Arg-180.

It belongs to the HAM1 NTPase family. As to quaternary structure, homodimer. It depends on Mg(2+) as a cofactor.

The enzyme catalyses XTP + H2O = XMP + diphosphate + H(+). It carries out the reaction dITP + H2O = dIMP + diphosphate + H(+). It catalyses the reaction ITP + H2O = IMP + diphosphate + H(+). Functionally, pyrophosphatase that catalyzes the hydrolysis of nucleoside triphosphates to their monophosphate derivatives, with a high preference for the non-canonical purine nucleotides XTP (xanthosine triphosphate), dITP (deoxyinosine triphosphate) and ITP. Seems to function as a house-cleaning enzyme that removes non-canonical purine nucleotides from the nucleotide pool, thus preventing their incorporation into DNA/RNA and avoiding chromosomal lesions. This Thermoanaerobacter pseudethanolicus (strain ATCC 33223 / 39E) (Clostridium thermohydrosulfuricum) protein is dITP/XTP pyrophosphatase.